We begin with the raw amino-acid sequence, 954 residues long: Glycine dehydrogenase (decarboxylating) (954 aa).

The residue at position 701 (lysine 701) is an N6-(pyridoxal phosphate)lysine.

The protein belongs to the GcvP family. The glycine cleavage system is composed of four proteins: P, T, L and H. It depends on pyridoxal 5'-phosphate as a cofactor.

The catalysed reaction is N(6)-[(R)-lipoyl]-L-lysyl-[glycine-cleavage complex H protein] + glycine + H(+) = N(6)-[(R)-S(8)-aminomethyldihydrolipoyl]-L-lysyl-[glycine-cleavage complex H protein] + CO2. Functionally, the glycine cleavage system catalyzes the degradation of glycine. The P protein binds the alpha-amino group of glycine through its pyridoxal phosphate cofactor; CO(2) is released and the remaining methylamine moiety is then transferred to the lipoamide cofactor of the H protein. The protein is Glycine dehydrogenase (decarboxylating) of Bordetella pertussis (strain Tohama I / ATCC BAA-589 / NCTC 13251).